A 623-amino-acid polypeptide reads, in one-letter code: Glutathione import ATP-binding protein GsiA (623 aa).

ABC transporter domains lie at 15–269 and 314–564; these read VENL…RALL and LRVR…RKLL. Residues 49-56 and 357-364 contribute to the ATP site; these read GESGSGKS.

This sequence belongs to the ABC transporter superfamily. Glutathione importer (TC 3.A.1.5.11) family. In terms of assembly, the complex is composed of two ATP-binding proteins (GsiA), two transmembrane proteins (GsiC and GsiD) and a solute-binding protein (GsiB).

It is found in the cell inner membrane. The enzyme catalyses glutathione(out) + ATP + H2O = glutathione(in) + ADP + phosphate + H(+). Part of the ABC transporter complex GsiABCD involved in glutathione import. Responsible for energy coupling to the transport system. This is Glutathione import ATP-binding protein GsiA from Escherichia coli O1:K1 / APEC.